An 898-amino-acid polypeptide reads, in one-letter code: Conserved oligomeric Golgi complex subunit 5 (898 aa).

Residues M1–L30 are disordered. Residues D129–A192 adopt a coiled-coil conformation. Disordered regions lie at residues N311 to N339, S519 to T551, and S679 to T705. Positions S679–S702 are enriched in low complexity.

It is found in the golgi apparatus membrane. This Dictyostelium discoideum (Social amoeba) protein is Conserved oligomeric Golgi complex subunit 5 (cog5).